Reading from the N-terminus, the 256-residue chain is Thiazole synthase (256 aa).

Residue Lys-95 is the Schiff-base intermediate with DXP of the active site. 1-deoxy-D-xylulose 5-phosphate contacts are provided by residues Gly-156, Ala-182–Gly-183, and Asn-204–Thr-205.

This sequence belongs to the ThiG family. In terms of assembly, homotetramer. Forms heterodimers with either ThiH or ThiS.

Its subcellular location is the cytoplasm. It catalyses the reaction [ThiS sulfur-carrier protein]-C-terminal-Gly-aminoethanethioate + 2-iminoacetate + 1-deoxy-D-xylulose 5-phosphate = [ThiS sulfur-carrier protein]-C-terminal Gly-Gly + 2-[(2R,5Z)-2-carboxy-4-methylthiazol-5(2H)-ylidene]ethyl phosphate + 2 H2O + H(+). It participates in cofactor biosynthesis; thiamine diphosphate biosynthesis. Its function is as follows. Catalyzes the rearrangement of 1-deoxy-D-xylulose 5-phosphate (DXP) to produce the thiazole phosphate moiety of thiamine. Sulfur is provided by the thiocarboxylate moiety of the carrier protein ThiS. In vitro, sulfur can be provided by H(2)S. This is Thiazole synthase from Salmonella arizonae (strain ATCC BAA-731 / CDC346-86 / RSK2980).